The chain runs to 83 residues: Small ribosomal subunit protein uS17 (83 aa).

It belongs to the universal ribosomal protein uS17 family. Part of the 30S ribosomal subunit.

In terms of biological role, one of the primary rRNA binding proteins, it binds specifically to the 5'-end of 16S ribosomal RNA. This chain is Small ribosomal subunit protein uS17, found in Chlamydia muridarum (strain MoPn / Nigg).